The chain runs to 121 residues: Small ribosomal subunit protein uS13 (121 aa).

The segment at 92–121 (RKGLPMRGQRTRTNARTRKGPRRAAQALKK) is disordered.

The protein belongs to the universal ribosomal protein uS13 family. As to quaternary structure, part of the 30S ribosomal subunit. Forms a loose heterodimer with protein S19. Forms two bridges to the 50S subunit in the 70S ribosome.

Located at the top of the head of the 30S subunit, it contacts several helices of the 16S rRNA. In the 70S ribosome it contacts the 23S rRNA (bridge B1a) and protein L5 of the 50S subunit (bridge B1b), connecting the 2 subunits; these bridges are implicated in subunit movement. Contacts the tRNAs in the A and P-sites. The protein is Small ribosomal subunit protein uS13 of Burkholderia thailandensis (strain ATCC 700388 / DSM 13276 / CCUG 48851 / CIP 106301 / E264).